A 549-amino-acid polypeptide reads, in one-letter code: Glucose-6-phosphate isomerase (549 aa).

The active-site Proton donor is glutamate 354. Active-site residues include histidine 385 and lysine 513.

Belongs to the GPI family.

The protein localises to the cytoplasm. It catalyses the reaction alpha-D-glucose 6-phosphate = beta-D-fructose 6-phosphate. The protein operates within carbohydrate biosynthesis; gluconeogenesis. Its pathway is carbohydrate degradation; glycolysis; D-glyceraldehyde 3-phosphate and glycerone phosphate from D-glucose: step 2/4. Functionally, catalyzes the reversible isomerization of glucose-6-phosphate to fructose-6-phosphate. The polypeptide is Glucose-6-phosphate isomerase (Nitrosococcus oceani (strain ATCC 19707 / BCRC 17464 / JCM 30415 / NCIMB 11848 / C-107)).